A 250-amino-acid chain; its full sequence is Probable transcriptional regulatory protein Emin_1151 (250 aa).

This sequence belongs to the TACO1 family.

It localises to the cytoplasm. The polypeptide is Probable transcriptional regulatory protein Emin_1151 (Elusimicrobium minutum (strain Pei191)).